Here is a 293-residue protein sequence, read N- to C-terminus: Acetylglutamate kinase (293 aa).

Residues 70-71, Arg92, and Asn186 contribute to the substrate site; that span reads GG.

Belongs to the acetylglutamate kinase family. ArgB subfamily.

The protein localises to the cytoplasm. The catalysed reaction is N-acetyl-L-glutamate + ATP = N-acetyl-L-glutamyl 5-phosphate + ADP. The protein operates within amino-acid biosynthesis; L-arginine biosynthesis; N(2)-acetyl-L-ornithine from L-glutamate: step 2/4. Catalyzes the ATP-dependent phosphorylation of N-acetyl-L-glutamate. The protein is Acetylglutamate kinase of Synechococcus sp. (strain CC9605).